The following is a 392-amino-acid chain: RNA-binding motif protein, X-linked-like-2 (392 aa).

Residues 8–86 (GKLFIGGLNL…KAIKVAQATK (79 aa)) form the RRM domain. Basic and acidic residues predominate over residues 67–78 (RDMNGKSLDGKA). A disordered region spans residues 67–392 (RDMNGKSLDG…LERGGGRSRY (326 aa)). A compositionally biased stretch (pro residues) spans 150 to 163 (RGPPPRRVGPPPKR). Basic and acidic residues-rich tracts occupy residues 194–229 (PRRE…REPR) and 238–283 (YTHR…REPF). Positions 319–331 (YSGGRDSYSSSYG) are enriched in low complexity. Residues 381 to 392 (GRLERGGGRSRY) show a composition bias toward basic and acidic residues.

In terms of tissue distribution, expressed predominantly in spermatocytes and less in round spermatids (at protein level). Expressed in germ cells.

It localises to the nucleus. The protein is RNA-binding motif protein, X-linked-like-2 (RBMXL2) of Homo sapiens (Human).